The sequence spans 666 residues: Protein-arginine deiminase type-4 (666 aa).

Ca(2+) is bound by residues N153, D155, D165, D168, D176, and D179. Citrulline is present on residues R212 and R218. Q349 lines the Ca(2+) pocket. Residue D350 is part of the active site. Ca(2+) is bound by residues E351, E353, D369, and S370. Residues R372, R374, and R383 each carry the citrulline modification. R374 is a binding site for substrate. 3 residues coordinate Ca(2+): F407, L410, and E411. Residues H471, D473, and C648 contribute to the active site.

This sequence belongs to the protein arginine deiminase family. Ca(2+) is required as a cofactor. Post-translationally, autocitrullination at Arg-372 and Arg-374 inactivates the enzyme. In terms of tissue distribution, epidermis.

The protein resides in the cytoplasm. The protein localises to the nucleus. It localises to the cytoplasmic granule. The enzyme catalyses L-arginyl-[protein] + H2O = L-citrullyl-[protein] + NH4(+). In terms of biological role, catalyzes the citrullination/deimination of arginine residues of proteins such as histones, thereby playing a key role in histone code and regulation of stem cell maintenance. Citrullinates histone H1 at 'Arg-54' (to form H1R54ci), histone H3 at 'Arg-2', 'Arg-8', 'Arg-17' and/or 'Arg-26' (to form H3R2ci, H3R8ci, H3R17ci, H3R26ci, respectively) and histone H4 at 'Arg-3' (to form H4R3ci). Acts as a key regulator of stem cell maintenance by mediating citrullination of histone H1: citrullination of 'Arg-54' of histone H1 (H1R54ci) results in H1 displacement from chromatin and global chromatin decondensation, thereby promoting pluripotency and stem cell maintenance. Promotes profound chromatin decondensation during the innate immune response to infection in neutrophils by mediating formation of H1R54ci. Required for the formation of neutrophil extracellular traps (NETs); NETs are mainly composed of DNA fibers and are released by neutrophils to bind pathogens during inflammation. Citrullination of histone H3 prevents their methylation by CARM1 and HRMT1L2/PRMT1 and represses transcription. Citrullinates EP300/P300 at 'Arg-2142', which favors its interaction with NCOA2/GRIP1. This chain is Protein-arginine deiminase type-4 (Padi4), found in Rattus norvegicus (Rat).